The sequence spans 282 residues: Parvulin-like PPIase (282 aa).

An N-terminal signal peptide occupies residues 1–20; sequence MKKLSVIFLSVSMLSSIAFG. The PpiC domain maps to 138–231; it reads KEQIKVAHIL…FGWHIIKVLE (94 aa).

The protein belongs to the PpiC/parvulin rotamase family.

It is found in the cell outer membrane. The catalysed reaction is [protein]-peptidylproline (omega=180) = [protein]-peptidylproline (omega=0). The protein is Parvulin-like PPIase (plp) of Rickettsia prowazekii (strain Madrid E).